Reading from the N-terminus, the 88-residue chain is Small ribosomal subunit protein uS19 (88 aa).

This sequence belongs to the universal ribosomal protein uS19 family.

Protein S19 forms a complex with S13 that binds strongly to the 16S ribosomal RNA. This chain is Small ribosomal subunit protein uS19 (rpsS), found in Chlamydia pneumoniae (Chlamydophila pneumoniae).